The following is a 238-amino-acid chain: Uridylate kinase (238 aa).

Residue 12–15 (KVSG) coordinates ATP. Glycine 54 serves as a coordination point for UMP. Residues glycine 55 and arginine 59 each coordinate ATP. UMP-binding positions include aspartate 74 and 135–142 (TGNPYFTT). ATP contacts are provided by threonine 162, asparagine 163, tyrosine 168, and aspartate 171.

The protein belongs to the UMP kinase family. In terms of assembly, homohexamer.

It is found in the cytoplasm. It carries out the reaction UMP + ATP = UDP + ADP. Its pathway is pyrimidine metabolism; CTP biosynthesis via de novo pathway; UDP from UMP (UMPK route): step 1/1. With respect to regulation, inhibited by UTP. Functionally, catalyzes the reversible phosphorylation of UMP to UDP. This Azorhizobium caulinodans (strain ATCC 43989 / DSM 5975 / JCM 20966 / LMG 6465 / NBRC 14845 / NCIMB 13405 / ORS 571) protein is Uridylate kinase.